A 387-amino-acid chain; its full sequence is Tetratricopeptide repeat protein 4 (387 aa).

Met-1 carries the N-acetylmethionine modification. Ser-47 and Ser-51 each carry phosphoserine. TPR repeat units lie at residues 79–112 (AKTY…KCAD), 117–150 (AVLY…KPCH), and 151–184 (LKAI…DAKE). Ser-243 is modified (phosphoserine).

Belongs to the TTC4 family. Interacts (via TPR repeats) with HSP90AB1. Interacts with HSPA8 and CDC6. Interacts with TBK1. Interacts with MSL1. As to expression, highly expressed in proliferating tissue and tumor cell lines but not in normal cell lines.

It localises to the nucleus. The protein localises to the nucleoplasm. It is found in the cytoplasm. In terms of biological role, may act as a co-chaperone for HSP90AB1. Promotes Sendai virus (SeV)-induced host cell innate immune responses. This Homo sapiens (Human) protein is Tetratricopeptide repeat protein 4 (TTC4).